The primary structure comprises 185 residues: Ribosome-recycling factor (185 aa).

The protein belongs to the RRF family.

It localises to the cytoplasm. Its function is as follows. Responsible for the release of ribosomes from messenger RNA at the termination of protein biosynthesis. May increase the efficiency of translation by recycling ribosomes from one round of translation to another. This Francisella philomiragia subsp. philomiragia (strain ATCC 25017 / CCUG 19701 / FSC 153 / O#319-036) protein is Ribosome-recycling factor.